Here is a 66-residue protein sequence, read N- to C-terminus: Large ribosomal subunit protein bL33c (66 aa).

This sequence belongs to the bacterial ribosomal protein bL33 family.

Its subcellular location is the plastid. The protein localises to the chloroplast. The polypeptide is Large ribosomal subunit protein bL33c (Jasminum nudiflorum (Winter jasmine)).